The chain runs to 341 residues: Alpha-1,4-N-acetylglucosaminyltransferase (341 aa).

The Cytoplasmic portion of the chain corresponds to 1–4 (MLKE). The chain crosses the membrane as a helical; Signal-anchor for type II membrane protein span at residues 5–25 (IYLSLSLVLVFACGLLYQLTM). Residues 26–341 (RSQCFFACLP…VSKKPGTGSR (316 aa)) are Lumenal-facing. An N-linked (GlcNAc...) asparagine glycan is attached at N100. Residues 168 to 170 (DTD) carry the DXD motif motif.

It belongs to the glycosyltransferase 32 family.

The protein localises to the golgi apparatus membrane. The protein operates within protein modification; protein glycosylation. Catalyzes the transfer of N-acetylglucosamine (GlcNAc) to core 2 branched O-glycans. Necessary for the synthesis of type III mucin which is specifically produced in the stomach, duodenum, and pancreatic duct. May protect against inflammation-associated gastric adenocarcinoma. The protein is Alpha-1,4-N-acetylglucosaminyltransferase of Mus musculus (Mouse).